The sequence spans 831 residues: uncharacterized protein (831 aa).

His787 (tele-phosphohistidine intermediate) is an active-site residue.

The protein belongs to the PEP-utilizing enzyme family.

This is an uncharacterized protein from Bacillus subtilis (strain 168).